The primary structure comprises 454 residues: Photosystem II CP47 reaction center protein (454 aa).

6 helical membrane-spanning segments follow: residues 6–26, 47–61, 86–102, 149–164, 183–198, and 403–418; these read MFVL…GWTI, IILS…IWHW, GIHL…FGAF, IAAG…FHLS, VLSS…AFVV, and SFAL…HGAR.

The protein belongs to the PsbB/PsbC family. PsbB subfamily. In terms of assembly, PSII is composed of 1 copy each of membrane proteins PsbA, PsbB, PsbC, PsbD, PsbE, PsbF, PsbH, PsbI, PsbJ, PsbK, PsbL, PsbM, PsbT, PsbX, PsbY, PsbZ, Psb30/Ycf12, at least 3 peripheral proteins of the oxygen-evolving complex and a large number of cofactors. It forms dimeric complexes. Binds multiple chlorophylls. PSII binds additional chlorophylls, carotenoids and specific lipids. is required as a cofactor.

The protein localises to the plastid. The protein resides in the chloroplast thylakoid membrane. Functionally, one of the components of the core complex of photosystem II (PSII). It binds chlorophyll and helps catalyze the primary light-induced photochemical processes of PSII. PSII is a light-driven water:plastoquinone oxidoreductase, using light energy to abstract electrons from H(2)O, generating O(2) and a proton gradient subsequently used for ATP formation. The chain is Photosystem II CP47 reaction center protein from Ostreococcus tauri.